Consider the following 675-residue polypeptide: Probable potassium transport system protein Kup (675 aa).

A run of 12 helical transmembrane segments spans residues 12 to 32 (LGMLITLGVVYGDIGTSPLYV), 55 to 75 (VSLIFWTLMLITTVKYVLVAL), 98 to 118 (WLIFVALIGGAALLADGTLTP), 143 to 163 (WLVPLSVTLILVSLFTIQVLG), 170 to 190 (SFGPMMLLWFIVIGGIGLLNI), 216 to 236 (MGIFILGSVFLATTGAEALYS), 249 to 269 (TWPFVYAMLILNYLGQGAWML), 296 to 316 (IAMIVLATVAAIIASQALITG), 345 to 365 (IYIGAINWLLCLVTLSIVWLF), 374 to 394 (AYGLAITLTMLMTTILLSQWV), 401 to 421 (FWSLALLAGFGLLETLFLVAS), and 428 to 448 (GGYLTLGLTLMIFLIMVVWFF).

Belongs to the HAK/KUP transporter (TC 2.A.72) family.

It is found in the cell membrane. The catalysed reaction is K(+)(in) + H(+)(in) = K(+)(out) + H(+)(out). Transport of potassium into the cell. Likely operates as a K(+):H(+) symporter. This is Probable potassium transport system protein Kup from Levilactobacillus brevis (strain ATCC 367 / BCRC 12310 / CIP 105137 / JCM 1170 / LMG 11437 / NCIMB 947 / NCTC 947) (Lactobacillus brevis).